Reading from the N-terminus, the 144-residue chain is MKLNDLSPAPGSRREKHRPGRGIGSGLGKTGGRGHKGQTSRSGGSIAPGFEGGQQPLHRRLPKFGFVSLKAMDRAEVRLSELAKVEGDVISVQSLKDANVINQHIQRVKIMLSGEVTRAVTIKGIAATKGARAAIEAAGGKFEE.

A disordered region spans residues 1-57 (MKLNDLSPAPGSRREKHRPGRGIGSGLGKTGGRGHKGQTSRSGGSIAPGFEGGQQPL). Residues 21–31 (RGIGSGLGKTG) are compositionally biased toward gly residues.

It belongs to the universal ribosomal protein uL15 family. In terms of assembly, part of the 50S ribosomal subunit.

In terms of biological role, binds to the 23S rRNA. This is Large ribosomal subunit protein uL15 from Pseudomonas putida (strain ATCC 700007 / DSM 6899 / JCM 31910 / BCRC 17059 / LMG 24140 / F1).